A 319-amino-acid chain; its full sequence is Protein-methionine-sulfoxide reductase catalytic subunit MsrP (319 aa).

A signal peptide (tat-type signal) is located at residues 1–54; it reads MSSFKPSRFSTARLTGDAVTPKSIYLRRREFMIGLGAIAATGAASSAFADPLEA. Mo-molybdopterin-binding positions include Asn-75, 78-79, Cys-133, Asn-218, Arg-223, and 234-236; these read YE and GIK.

Belongs to the MsrP family. In terms of assembly, heterodimer of a catalytic subunit (MsrP) and a heme-binding subunit (MsrQ). Requires Mo-molybdopterin as cofactor. Post-translationally, predicted to be exported by the Tat system. The position of the signal peptide cleavage has not been experimentally proven.

It localises to the periplasm. It catalyses the reaction L-methionyl-[protein] + a quinone + H2O = L-methionyl-(S)-S-oxide-[protein] + a quinol. It carries out the reaction L-methionyl-[protein] + a quinone + H2O = L-methionyl-(R)-S-oxide-[protein] + a quinol. Functionally, part of the MsrPQ system that repairs oxidized periplasmic proteins containing methionine sulfoxide residues (Met-O), using respiratory chain electrons. Thus protects these proteins from oxidative-stress damage caused by reactive species of oxygen and chlorine generated by the host defense mechanisms. MsrPQ is essential for the maintenance of envelope integrity under bleach stress, rescuing a wide series of structurally unrelated periplasmic proteins from methionine oxidation. The catalytic subunit MsrP is non-stereospecific, being able to reduce both (R-) and (S-) diastereoisomers of methionine sulfoxide. The sequence is that of Protein-methionine-sulfoxide reductase catalytic subunit MsrP from Brucella melitensis biotype 1 (strain ATCC 23456 / CCUG 17765 / NCTC 10094 / 16M).